The sequence spans 826 residues: Lon protease (826 aa).

Residues 1–20 (MSEEELNNRDTESKQEHDEN) are compositionally biased toward basic and acidic residues. Positions 1–27 (MSEEELNNRDTESKQEHDENNSNFEAG) are disordered. One can recognise a Lon N-terminal domain in the interval 33 to 231 (LPVLPLREVI…KVHALLEKEL (199 aa)). 384–391 (GPPGVGKT) serves as a coordination point for ATP. In terms of domain architecture, Lon proteolytic spans 620 to 801 (ENLVGMTTGL…SEALTFTLAE (182 aa)). Catalysis depends on residues Ser-707 and Lys-750.

This sequence belongs to the peptidase S16 family. Homohexamer. Organized in a ring with a central cavity.

Its subcellular location is the cytoplasm. The catalysed reaction is Hydrolysis of proteins in presence of ATP.. ATP-dependent serine protease that mediates the selective degradation of mutant and abnormal proteins as well as certain short-lived regulatory proteins. Required for cellular homeostasis and for survival from DNA damage and developmental changes induced by stress. Degrades polypeptides processively to yield small peptide fragments that are 5 to 10 amino acids long. Binds to DNA in a double-stranded, site-specific manner. This chain is Lon protease, found in Neorickettsia sennetsu (strain ATCC VR-367 / Miyayama) (Ehrlichia sennetsu).